A 446-amino-acid polypeptide reads, in one-letter code: Exodeoxyribonuclease 7 large subunit (446 aa).

It belongs to the XseA family. In terms of assembly, heterooligomer composed of large and small subunits.

Its subcellular location is the cytoplasm. The catalysed reaction is Exonucleolytic cleavage in either 5'- to 3'- or 3'- to 5'-direction to yield nucleoside 5'-phosphates.. In terms of biological role, bidirectionally degrades single-stranded DNA into large acid-insoluble oligonucleotides, which are then degraded further into small acid-soluble oligonucleotides. The polypeptide is Exodeoxyribonuclease 7 large subunit (Streptococcus gordonii (strain Challis / ATCC 35105 / BCRC 15272 / CH1 / DL1 / V288)).